A 158-amino-acid polypeptide reads, in one-letter code: Phosphopantetheine adenylyltransferase (158 aa).

Thr-10 lines the substrate pocket. ATP is bound by residues 10 to 11 and His-18; that span reads TF. Substrate-binding residues include Lys-42, Leu-74, and Arg-88. ATP contacts are provided by residues 89-91, Glu-99, and 124-130; these read GLR and NSFISST.

Belongs to the bacterial CoaD family. In terms of assembly, homohexamer. Mg(2+) serves as cofactor.

It localises to the cytoplasm. It catalyses the reaction (R)-4'-phosphopantetheine + ATP + H(+) = 3'-dephospho-CoA + diphosphate. Its pathway is cofactor biosynthesis; coenzyme A biosynthesis; CoA from (R)-pantothenate: step 4/5. Reversibly transfers an adenylyl group from ATP to 4'-phosphopantetheine, yielding dephospho-CoA (dPCoA) and pyrophosphate. The polypeptide is Phosphopantetheine adenylyltransferase (Shewanella loihica (strain ATCC BAA-1088 / PV-4)).